Here is a 435-residue protein sequence, read N- to C-terminus: Histidine--tRNA ligase (435 aa).

Belongs to the class-II aminoacyl-tRNA synthetase family. As to quaternary structure, homodimer.

The protein localises to the cytoplasm. The enzyme catalyses tRNA(His) + L-histidine + ATP = L-histidyl-tRNA(His) + AMP + diphosphate + H(+). This Synechococcus sp. (strain ATCC 27144 / PCC 6301 / SAUG 1402/1) (Anacystis nidulans) protein is Histidine--tRNA ligase.